The primary structure comprises 276 residues: Pre-rRNA-processing protein PNO1 (276 aa).

Disordered stretches follow at residues methionine 1 to glutamate 39 and threonine 51 to asparagine 92. 2 stretches are compositionally biased toward polar residues: residues lysine 13–glutamine 34 and threonine 51–leucine 75. The 53-residue stretch at glycine 197–valine 249 folds into the KH domain.

Belongs to the PNO1 family. In terms of assembly, component of the small ribosomal subunit, ribosomal RNA processing complex (SSU RRP complex).

Its subcellular location is the cytoplasm. The protein resides in the nucleus. The protein localises to the nucleolus. Required for small ribosomal subunit (SSU) synthesis. Has a role in the processing of early nucleolar and late cytoplasmic pre-RNA species. This Candida albicans (strain SC5314 / ATCC MYA-2876) (Yeast) protein is Pre-rRNA-processing protein PNO1 (PNO1).